The chain runs to 178 residues: uncharacterized protein (178 aa).

5 helical membrane-spanning segments follow: residues 1–21 (MISI…YGGG), 47–67 (MLAL…AYVG), 75–95 (GFLI…IVLL), 117–137 (VIAV…IKAI), and 158–178 (MHPA…IPYL).

Belongs to the chromate ion transporter (CHR) (TC 2.A.51) family.

It localises to the cell membrane. This is an uncharacterized protein from Bacillus subtilis (strain 168).